Reading from the N-terminus, the 597-residue chain is MATLSMQVSILSKQVKNLNSFGMRASKLPMVARRVDVSTTRLRPICSASLQVEEETRRSGNYQASIWDNAFIQSFNTNKYRDEKHLNRKEELIAQVKVLLNTKMEAVKQLELIDDLRNLGLTYYFQDEFKKILTCIYNDHKCFKNEQVGDLYFTSLGFRLLRLHGFDVSEDVFSFFKNEDGSDFKASLGENTKDVLQLYEASFPIRVGEVTLEQARVFSTKILEKKVDEGINDEKLLAWIQHSLALPLHWRIQRLEARWFLDAYAARKDMNPLIFELGKIDFHIIQETQLEEVQEVSRWWTNSNLAEKLPFVRDRIVECYFWALGLFEPHEYGYQRKMAAIIITFVTIIDDVYDVYGTLDELQLFTDAIRKWDLESISTLPYYMQVCYLALYTYASELAYDILKDQGFNSISYLQRSWLSLVEGFFQEAKWYYAGYTPTLAEYLENAKVSISSPTIISQVYFTLPNSNEGTVVENVYGYHNMLYLSGMILRLADDLGTTQFELKRGDVQKAIQCYMKDNNATEKEGQEHVKYLLREAWKEMNTAMADPDCPLSEDLVDAAANLGRASQFIYLEGDGHGVQHSEIHNQMGGLIFEPYV.

A chloroplast-targeting transit peptide spans 1–47 (MATLSMQVSILSKQVKNLNSFGMRASKLPMVARRVDVSTTRLRPICS). Positions 350 and 354 each coordinate Mn(2+). Residues 350–354 (DDVYD) carry the DDXXD motif motif. Homodimerization regions lie at residues 356-362 (YGTLDEL) and 428-465 (EAKW…FTLP). Mn(2+) is bound by residues aspartate 494 and glutamate 502.

This sequence belongs to the terpene synthase family. In terms of assembly, homodimer. Requires Mn(2+) as cofactor. The cofactor is Mg(2+).

The protein resides in the plastid. It localises to the chloroplast. The catalysed reaction is (2E)-geranyl diphosphate = gamma-terpinene + diphosphate. It functions in the pathway secondary metabolite biosynthesis; terpenoid biosynthesis. In terms of biological role, involved in the biosynthesis of phenolic monoterpenes natural products thymol and carvacrol which have a broad range of biological activities acting as antimicrobial compounds, insecticides, antioxidants and pharmaceutical agents. Monoterpene synthase which catalyzes the conversion of geranyl diphosphate (GPP) to gamma-terpinene and minor amounts of other monoterpenes (e.g. alpha-thujene, alpha-terpinene, myrcene, sabinene, (+)-R-limonene, alpha-pinene and alpha-phellandrene). This Thymus caespititius (Cretan thyme) protein is Gamma-terpinene synthase, chloroplastic.